Reading from the N-terminus, the 158-residue chain is NAD(P)H-quinone oxidoreductase subunit J, chloroplastic (158 aa).

This sequence belongs to the complex I 30 kDa subunit family. As to quaternary structure, NDH is composed of at least 16 different subunits, 5 of which are encoded in the nucleus.

The protein resides in the plastid. It localises to the chloroplast thylakoid membrane. The enzyme catalyses a plastoquinone + NADH + (n+1) H(+)(in) = a plastoquinol + NAD(+) + n H(+)(out). It carries out the reaction a plastoquinone + NADPH + (n+1) H(+)(in) = a plastoquinol + NADP(+) + n H(+)(out). In terms of biological role, NDH shuttles electrons from NAD(P)H:plastoquinone, via FMN and iron-sulfur (Fe-S) centers, to quinones in the photosynthetic chain and possibly in a chloroplast respiratory chain. The immediate electron acceptor for the enzyme in this species is believed to be plastoquinone. Couples the redox reaction to proton translocation, and thus conserves the redox energy in a proton gradient. The chain is NAD(P)H-quinone oxidoreductase subunit J, chloroplastic from Platanus occidentalis (Sycamore).